We begin with the raw amino-acid sequence, 344 residues long: MAYYLKEPSIPTQEPERTGILVMNLGTPEAPTAKALRPYLRQFLSDRRVIELPRPLWWFILNGVILVLRPRQSAHKYATIWDKEGPPLMVNSQKQARLLEGYLHEAISSPYAVELGMRYGSPSIASALGKLKAKNCNRILLFPLYPQYAASSSASALDEAMRTLIRTRNMPEIRTIRDYHDHPAYIHAVAKSIRLYWQQHGKPEKLVMSFHGVPRRTYDLGDPYYDQCQTSGKLVAQALGLEEDQYMIAFQSRFGTAEWLQPYFAPSIQALGKQKLRRVDVVCPGFSSDCLETLEEIAMEGKSLFLEGGGGEYHYIPALNDNDTWIKAMREIALDNLQGWVTRR.

Fe cation contacts are provided by His-211 and Glu-292.

The protein belongs to the ferrochelatase family.

The protein localises to the cytoplasm. The enzyme catalyses heme b + 2 H(+) = protoporphyrin IX + Fe(2+). It participates in porphyrin-containing compound metabolism; protoheme biosynthesis; protoheme from protoporphyrin-IX: step 1/1. In terms of biological role, catalyzes the ferrous insertion into protoporphyrin IX. In Methylobacillus flagellatus (strain ATCC 51484 / DSM 6875 / VKM B-1610 / KT), this protein is Ferrochelatase.